Consider the following 288-residue polypeptide: Diaminopimelate epimerase (288 aa).

Residues Asn-13, Gln-51, and Asn-71 each coordinate substrate. Catalysis depends on Cys-80, which acts as the Proton donor. Substrate-binding positions include 81–82 (GN), Asn-166, Asn-200, and 218–219 (ER). Residue Cys-227 is the Proton acceptor of the active site. Position 228 to 229 (228 to 229 (GT)) interacts with substrate.

It belongs to the diaminopimelate epimerase family. As to quaternary structure, homodimer.

It is found in the cytoplasm. It carries out the reaction (2S,6S)-2,6-diaminopimelate = meso-2,6-diaminopimelate. The protein operates within amino-acid biosynthesis; L-lysine biosynthesis via DAP pathway; DL-2,6-diaminopimelate from LL-2,6-diaminopimelate: step 1/1. Its function is as follows. Catalyzes the stereoinversion of LL-2,6-diaminopimelate (L,L-DAP) to meso-diaminopimelate (meso-DAP), a precursor of L-lysine and an essential component of the bacterial peptidoglycan. The protein is Diaminopimelate epimerase of Caulobacter vibrioides (strain ATCC 19089 / CIP 103742 / CB 15) (Caulobacter crescentus).